We begin with the raw amino-acid sequence, 501 residues long: Lysine--tRNA ligase (501 aa).

2 residues coordinate Mg(2+): glutamate 402 and glutamate 409.

The protein belongs to the class-II aminoacyl-tRNA synthetase family. As to quaternary structure, homodimer. It depends on Mg(2+) as a cofactor.

The protein resides in the cytoplasm. The enzyme catalyses tRNA(Lys) + L-lysine + ATP = L-lysyl-tRNA(Lys) + AMP + diphosphate. In Helicobacter pylori (strain HPAG1), this protein is Lysine--tRNA ligase.